The primary structure comprises 85 residues: Elongation factor 1-beta (85 aa).

The protein belongs to the EF-1-beta/EF-1-delta family.

Its function is as follows. Promotes the exchange of GDP for GTP in EF-1-alpha/GDP, thus allowing the regeneration of EF-1-alpha/GTP that could then be used to form the ternary complex EF-1-alpha/GTP/AAtRNA. The chain is Elongation factor 1-beta from Methanosphaerula palustris (strain ATCC BAA-1556 / DSM 19958 / E1-9c).